A 430-amino-acid chain; its full sequence is Agropine synthesis reductase (430 aa).

203-227 (LISGPSRGIGKAIAENLIAHGYRMS) is a binding site for NAD(+). Residue serine 333 coordinates substrate. Tyrosine 346 serves as the catalytic Proton acceptor.

Belongs to the short-chain dehydrogenases/reductases (SDR) family.

It participates in opine metabolism; mannopine biosynthesis. In terms of biological role, reduces deoxy-fructosyl-glutamine to mannopine. The chain is Agropine synthesis reductase (mas1) from Rhizobium rhizogenes (Agrobacterium rhizogenes).